We begin with the raw amino-acid sequence, 91 residues long: uncharacterized protein (91 aa).

A disordered region spans residues 71–91 (EANDRPSKKCGSGNLRVEKLV).

This is an uncharacterized protein from Archaeoglobus fulgidus (strain ATCC 49558 / DSM 4304 / JCM 9628 / NBRC 100126 / VC-16).